Consider the following 393-residue polypeptide: S-adenosylmethionine synthase 3 (393 aa).

Residue glutamate 9 coordinates Mg(2+). An ATP-binding site is contributed by histidine 15. Glutamate 43 contributes to the K(+) binding site. Residues glutamate 56 and glutamine 99 each contribute to the L-methionine site. ATP-binding positions include 167-169, 235-238, aspartate 246, 252-253, alanine 269, lysine 273, and lysine 277; these read NGK, SGRF, and RK. Residue aspartate 246 participates in L-methionine binding. Lysine 277 contributes to the L-methionine binding site.

The protein belongs to the AdoMet synthase family. As to quaternary structure, homotetramer. Mn(2+) is required as a cofactor. Requires Mg(2+) as cofactor. It depends on Co(2+) as a cofactor. K(+) serves as cofactor. In terms of tissue distribution, mostly expressed in flowers, seedpods and roots, and, to a lower extent, in stems and leaves.

The protein resides in the cytoplasm. It catalyses the reaction L-methionine + ATP + H2O = S-adenosyl-L-methionine + phosphate + diphosphate. The protein operates within amino-acid biosynthesis; S-adenosyl-L-methionine biosynthesis; S-adenosyl-L-methionine from L-methionine: step 1/1. Catalyzes the formation of S-adenosylmethionine from methionine and ATP. The reaction comprises two steps that are both catalyzed by the same enzyme: formation of S-adenosylmethionine (AdoMet) and triphosphate, and subsequent hydrolysis of the triphosphate. The protein is S-adenosylmethionine synthase 3 (MSAMS3) of Brassica juncea (Indian mustard).